The sequence spans 475 residues: L-seryl-tRNA(Sec) selenium transferase (475 aa).

Lys-295 is subject to N6-(pyridoxal phosphate)lysine.

The protein belongs to the SelA family. The cofactor is pyridoxal 5'-phosphate.

The protein localises to the cytoplasm. The enzyme catalyses L-seryl-tRNA(Sec) + selenophosphate + H(+) = L-selenocysteinyl-tRNA(Sec) + phosphate. Its pathway is aminoacyl-tRNA biosynthesis; selenocysteinyl-tRNA(Sec) biosynthesis; selenocysteinyl-tRNA(Sec) from L-seryl-tRNA(Sec) (bacterial route): step 1/1. Functionally, converts seryl-tRNA(Sec) to selenocysteinyl-tRNA(Sec) required for selenoprotein biosynthesis. In Desulfovibrio desulfuricans (strain ATCC 27774 / DSM 6949 / MB), this protein is L-seryl-tRNA(Sec) selenium transferase.